Reading from the N-terminus, the 30-residue chain is Cyclotide cter-P (30 aa).

Positions 1–30 (GIPCGESCVFIPCITAAIGCSCKSKVCYRN) form a cross-link, cyclopeptide (Gly-Asn). 3 disulfides stabilise this stretch: Cys-4/Cys-20, Cys-8/Cys-22, and Cys-13/Cys-27.

In terms of processing, this is a cyclic peptide.

The protein resides in the secreted. Its function is as follows. Probably participates in a plant defense mechanism. This Clitoria ternatea (Butterfly pea) protein is Cyclotide cter-P.